The following is a 544-amino-acid chain: Chaperonin GroEL 2 (544 aa).

ATP contacts are provided by residues 30 to 33 (TLGP), Lys51, 87 to 91 (DGTTT), Gly415, and Asp496.

This sequence belongs to the chaperonin (HSP60) family. As to quaternary structure, forms a cylinder of 14 subunits composed of two heptameric rings stacked back-to-back. Interacts with the co-chaperonin GroES.

It localises to the cytoplasm. It carries out the reaction ATP + H2O + a folded polypeptide = ADP + phosphate + an unfolded polypeptide.. In terms of biological role, together with its co-chaperonin GroES, plays an essential role in assisting protein folding. The GroEL-GroES system forms a nano-cage that allows encapsulation of the non-native substrate proteins and provides a physical environment optimized to promote and accelerate protein folding. The chain is Chaperonin GroEL 2 from Rhizobium johnstonii (strain DSM 114642 / LMG 32736 / 3841) (Rhizobium leguminosarum bv. viciae).